We begin with the raw amino-acid sequence, 459 residues long: Exodeoxyribonuclease 7 large subunit (459 aa).

It belongs to the XseA family. In terms of assembly, heterooligomer composed of large and small subunits.

It is found in the cytoplasm. The enzyme catalyses Exonucleolytic cleavage in either 5'- to 3'- or 3'- to 5'-direction to yield nucleoside 5'-phosphates.. Bidirectionally degrades single-stranded DNA into large acid-insoluble oligonucleotides, which are then degraded further into small acid-soluble oligonucleotides. This is Exodeoxyribonuclease 7 large subunit from Pseudomonas aeruginosa (strain ATCC 15692 / DSM 22644 / CIP 104116 / JCM 14847 / LMG 12228 / 1C / PRS 101 / PAO1).